The primary structure comprises 258 residues: Snake venom serine protease PA (258 aa).

The first 18 residues, 1-18 (MVLIRVLANLLILQLSYA), serve as a signal peptide directing secretion. Residues 19–24 (QKSPEL) constitute a propeptide that is removed on maturation. Residues 25–249 (VVGGDECNIN…YNDWIKSIIA (225 aa)) enclose the Peptidase S1 domain. Disulfide bonds link Cys31–Cys163, Cys50–Cys66, Cys98–Cys256, Cys142–Cys210, Cys174–Cys189, and Cys200–Cys225. The N-linked (GlcNAc...) asparagine glycan is linked to Asn44. Residues His65 and Asp110 each act as charge relay system in the active site. The active-site Charge relay system is the Ser204.

This sequence belongs to the peptidase S1 family. Snake venom subfamily. In terms of assembly, monomer. Expressed by the venom gland.

It is found in the secreted. Functionally, snake venom serine protease that may act in the hemostasis system of the prey. The protein is Snake venom serine protease PA of Trimeresurus stejnegeri (Chinese green tree viper).